The primary structure comprises 301 residues: E3 ubiquitin-protein ligase DIS1 (301 aa).

The segment at 53-89 adopts an RING-type; degenerate zinc-finger fold; the sequence is CPVCLSAMYPPIHQCSNGHTLCSGCKPRVHNRCPTCR. The segment at 106-166 adopts an SIAH-type; degenerate zinc-finger fold; that stretch reads SLELPCKYQN…LVNHLKDDHK (61 aa).

The protein belongs to the SINA (Seven in absentia) family. As to quaternary structure, homodimer. Interacts with NEK6. Interacts with SKIPA.

Its subcellular location is the nucleus. The protein localises to the cytoplasm. It carries out the reaction S-ubiquitinyl-[E2 ubiquitin-conjugating enzyme]-L-cysteine + [acceptor protein]-L-lysine = [E2 ubiquitin-conjugating enzyme]-L-cysteine + N(6)-ubiquitinyl-[acceptor protein]-L-lysine.. It participates in protein modification; protein ubiquitination. E3 ubiquitin-protein ligase that mediates ubiquitination and subsequent proteasomal degradation of target proteins. E3 ubiquitin ligases accept ubiquitin from an E2 ubiquitin-conjugating enzyme in the form of a thioester and then directly transfers the ubiquitin to targeted substrates. Plays a negative role in drought stress tolerance through transcriptional and post-translational regulation of diverse stress-related genes. Interacts with the serine/threonine-protein kinase NEK6 and promotes its degradation via the 26S proteasome-dependent pathway. This chain is E3 ubiquitin-protein ligase DIS1, found in Oryza sativa subsp. japonica (Rice).